The sequence spans 64 residues: UPF0434 protein Bcen_1934 (64 aa).

This sequence belongs to the UPF0434 family.

This Burkholderia orbicola (strain AU 1054) protein is UPF0434 protein Bcen_1934.